The sequence spans 714 residues: Protein artemis (714 aa).

4 disordered regions span residues 391–500 (ELFD…ESNA), 516–577 (ESSE…TVLI), 598–617 (ALLSHDTPRDSQADDSRWKL), and 638–683 (EKDA…LTPD). The segment covering 427–440 (NESTESYRANTAYT) has biased composition (polar residues). Residues 447-468 (VDCEESNDDDDDDDDDDKEDDS) are compositionally biased toward acidic residues. 2 stretches are compositionally biased toward polar residues: residues 484-500 (SIASCNGIPSNQQESNA) and 532-543 (GSQSLFSDSDGV). Over residues 544–561 (SDSTHISSQNSSQSTHIS) the composition is skewed to low complexity. Residues 562–577 (EQGSQGWDSQMDTVLI) show a composition bias toward polar residues. 2 stretches are compositionally biased toward basic and acidic residues: residues 603–615 (DTPRDSQADDSRW) and 660–670 (RTPDLELKRDS). Serine 670 is subject to Phosphoserine; by ATM.

Belongs to the DNA repair metallo-beta-lactamase (DRMBL) family. In terms of assembly, interacts with PRKDC. Phosphorylation on undefined residues by PRKDC may stimulate endonucleolytic activity on 5' and 3' hairpins and overhangs. PRKDC must remain present, even after phosphorylation, for efficient hairpin opening.

It is found in the nucleus. Its function is as follows. Required for V(D)J recombination, the process by which exons encoding the antigen-binding domains of immunoglobulins and T-cell receptor proteins are assembled from individual V, (D), and J gene segments. V(D)J recombination is initiated by the lymphoid specific RAG endonuclease complex, which generates site specific DNA double strand breaks (DSBs). These DSBs present two types of DNA end structures: hairpin sealed coding ends and phosphorylated blunt signal ends. These ends are independently repaired by the non homologous end joining (NHEJ) pathway to form coding and signal joints respectively. This protein exhibits single-strand specific 5'-3' exonuclease activity in isolation, and acquires endonucleolytic activity on 5' and 3' hairpins and overhangs when in a complex with PRKDC. The latter activity is required specifically for the resolution of closed hairpins prior to the formation of the coding joint. May also be required for the repair of complex DSBs induced by ionizing radiation, which require substantial end-processing prior to religation by NHEJ. This chain is Protein artemis (DCLRE1C), found in Gallus gallus (Chicken).